The sequence spans 134 residues: Methylglyoxal synthase (134 aa).

Residues 1–134 (MVNLNIALIA…GLLEWRNAVK (134 aa)) form the MGS-like domain. Substrate contacts are provided by residues His11, Lys15, and 37–40 (TGAT). Asp63 functions as the Proton donor/acceptor in the catalytic mechanism. His90 contacts substrate.

It belongs to the methylglyoxal synthase family.

It carries out the reaction dihydroxyacetone phosphate = methylglyoxal + phosphate. Catalyzes the formation of methylglyoxal from dihydroxyacetone phosphate. The sequence is that of Methylglyoxal synthase from Thermoanaerobacterium thermosaccharolyticum (Clostridium thermosaccharolyticum).